The primary structure comprises 629 residues: UvrABC system protein C (629 aa).

Positions 12-91 (DRPGCYLFKD…IKKHKPKYNI (80 aa)) constitute a GIY-YIG domain. Positions 200–235 (QEVLERLRARMEQAAERLEFERAAELRDQIRAIEKV) constitute a UVR domain.

This sequence belongs to the UvrC family. In terms of assembly, interacts with UvrB in an incision complex.

Its subcellular location is the cytoplasm. In terms of biological role, the UvrABC repair system catalyzes the recognition and processing of DNA lesions. UvrC both incises the 5' and 3' sides of the lesion. The N-terminal half is responsible for the 3' incision and the C-terminal half is responsible for the 5' incision. This chain is UvrABC system protein C, found in Symbiobacterium thermophilum (strain DSM 24528 / JCM 14929 / IAM 14863 / T).